A 516-amino-acid chain; its full sequence is D-aminopeptidase (516 aa).

Ser-61 serves as the catalytic Nucleophile. The active-site Proton donor/acceptor is the Lys-64. Residues 476–486 form an important for specificity region; it reads RRSMDAPAPGD. Asp-480 provides a ligand contact to substrate.

This sequence belongs to the peptidase S12 family. As to quaternary structure, homodimer.

It catalyses the reaction Release of an N-terminal D-amino acid from a peptide, Xaa-|-Yaa-, in which Xaa is preferably D-Ala, D-Ser or D-Thr. D-amino acid amides and methyl esters also are hydrolyzed, as is glycine amide.. With respect to regulation, inhibited by beta-lactam compounds such as 6-aminopenicillic acid, 7-aminocephalosporanic acid, benzylpenicillin and ampicillin. Inhibited by p-chloromercuribenzoate. Functionally, hydrolyzes N-terminal residues in D-amino acid-containing peptides. This Cereibacter sphaeroides (strain ATCC 17023 / DSM 158 / JCM 6121 / CCUG 31486 / LMG 2827 / NBRC 12203 / NCIMB 8253 / ATH 2.4.1.) (Rhodobacter sphaeroides) protein is D-aminopeptidase.